Here is a 216-residue protein sequence, read N- to C-terminus: Orotidine 5'-phosphate decarboxylase (216 aa).

Substrate contacts are provided by residues Asp-12, Lys-34, 62–71, Ser-119, 172–182, Gly-194, and Arg-195; these read DFKVADIDAT and PGVGFQGGNAK. Lys-64 serves as the catalytic Proton donor.

It belongs to the OMP decarboxylase family. Type 1 subfamily. In terms of assembly, homodimer.

The catalysed reaction is orotidine 5'-phosphate + H(+) = UMP + CO2. It functions in the pathway pyrimidine metabolism; UMP biosynthesis via de novo pathway; UMP from orotate: step 2/2. Functionally, catalyzes the decarboxylation of orotidine 5'-monophosphate (OMP) to uridine 5'-monophosphate (UMP). This chain is Orotidine 5'-phosphate decarboxylase, found in Methanosphaera stadtmanae (strain ATCC 43021 / DSM 3091 / JCM 11832 / MCB-3).